The chain runs to 345 residues: MSSIRLTQYSHGAGCGCKISPKVLDTILKSQIPGFDDPTLVVGNSSKDDAAVVDIGNGQGIVSTTDFFMPIVDDPFTFGRIAATNAISDIYAMGGKPIVAIAILGWPINTLAPEVAQQVIDGGRQVCHEAGISLAGGHSIDAPEPIFGLAVTGIVPLDAIKQNDTAKVGDTLYLTKPLGIGILTTAQKKGKLKPEHEQLAPNAMCTLNKIGQRFAELPGVHAMTDVTGFGLAGHLLEMCEGSGVSARLDFKALPLLDEVDYYLSEGCVPGGTLRNFDSYGDKLDAMDDRTRNILCDPQTSGGLLVAVGKESEAELLAIAAQAGLTLSPIGQLQARTGNQFIEVVQ.

C15 is an active-site residue. ATP contacts are provided by residues K18 and 46 to 48 (SKD). Mg(2+) is bound at residue D49. ATP contacts are provided by residues D66, D89, and 137–139 (GHS). D89 provides a ligand contact to Mg(2+). D225 is a binding site for Mg(2+).

It belongs to the selenophosphate synthase 1 family. Class I subfamily. In terms of assembly, homodimer. The cofactor is Mg(2+).

It carries out the reaction hydrogenselenide + ATP + H2O = selenophosphate + AMP + phosphate + 2 H(+). Its function is as follows. Synthesizes selenophosphate from selenide and ATP. This Aeromonas hydrophila subsp. hydrophila (strain ATCC 7966 / DSM 30187 / BCRC 13018 / CCUG 14551 / JCM 1027 / KCTC 2358 / NCIMB 9240 / NCTC 8049) protein is Selenide, water dikinase.